Reading from the N-terminus, the 31-residue chain is Cytochrome b6-f complex subunit 6 (31 aa).

The chain crosses the membrane as a helical span at residues 4-24 (LTSYFGFLLAALTITPALFIG).

Belongs to the PetL family. In terms of assembly, the 4 large subunits of the cytochrome b6-f complex are cytochrome b6, subunit IV (17 kDa polypeptide, PetD), cytochrome f and the Rieske protein, while the 4 small subunits are PetG, PetL, PetM and PetN. The complex functions as a dimer.

It is found in the plastid. It localises to the chloroplast thylakoid membrane. Its function is as follows. Component of the cytochrome b6-f complex, which mediates electron transfer between photosystem II (PSII) and photosystem I (PSI), cyclic electron flow around PSI, and state transitions. PetL is important for photoautotrophic growth as well as for electron transfer efficiency and stability of the cytochrome b6-f complex. The protein is Cytochrome b6-f complex subunit 6 of Agrostis stolonifera (Creeping bentgrass).